Consider the following 308-residue polypeptide: MSFKDLHIISMKSFSRDMIDHVLNTAEMLEPIAKGKTKSDLLKGKILGVLFFEPSTRTRMSFETAMMRLGGDVLSLGSVDASSIAKGETLADTIRVVNGYANAIVLRHNKEGAAQLASEFSSVPILNAGDGAGHHPTQTFLDLYTIRRESHLDGLKIALAGDLKYGRTVHSLCYALSLYGAEITLVSPKELRLPADIIEDLRSRNIKLTEIEYIEDAIENVDVLYVTRIQKERFPDPAEYRKVANSLLISPELLEKAKPELKVMHPLPRTNEIDPRVDNTKHACYFKQSFYGVPIRMALLALVMGALE.

Carbamoyl phosphate contacts are provided by arginine 57 and threonine 58. Residue lysine 86 coordinates L-aspartate. Residues arginine 107, histidine 135, and glutamine 138 each contribute to the carbamoyl phosphate site. L-aspartate contacts are provided by arginine 167 and arginine 228. Positions 267 and 268 each coordinate carbamoyl phosphate.

The protein belongs to the aspartate/ornithine carbamoyltransferase superfamily. ATCase family. In terms of assembly, heterooligomer of catalytic and regulatory chains.

It carries out the reaction carbamoyl phosphate + L-aspartate = N-carbamoyl-L-aspartate + phosphate + H(+). Its pathway is pyrimidine metabolism; UMP biosynthesis via de novo pathway; (S)-dihydroorotate from bicarbonate: step 2/3. In terms of biological role, catalyzes the condensation of carbamoyl phosphate and aspartate to form carbamoyl aspartate and inorganic phosphate, the committed step in the de novo pyrimidine nucleotide biosynthesis pathway. This Methanococcoides burtonii (strain DSM 6242 / NBRC 107633 / OCM 468 / ACE-M) protein is Aspartate carbamoyltransferase catalytic subunit.